Consider the following 313-residue polypeptide: MSSREIRIATRKSALALWQAEYVKARLEQAHPGLLVTLVPMVSRGDKLLDSPLSKIGGKGLFVKELETALLENNADIAVHSMKDVPMDFPQGLGLFCICEREDPRDAFVSNTFASLDQLPAGSIVGTSSLRRQAQLLARRPDLQIRFLRGNVNTRLAKLDAGEYDAIILAAAGLIRLGFEDRITSAISVDDSLPAGGQGAVGIECRSVDAEIHALLAPLHHEDTAVRVIAERSLNKHLNGGCQVPIACYAVLEGDDVWLRGLVGDPSGSVLLHADARAPQTSAQALGVQVAEALLEQGAADILKAVYGEANNE.

C242 carries the post-translational modification S-(dipyrrolylmethanemethyl)cysteine.

Belongs to the HMBS family. Monomer. Dipyrromethane is required as a cofactor.

The catalysed reaction is 4 porphobilinogen + H2O = hydroxymethylbilane + 4 NH4(+). Its pathway is porphyrin-containing compound metabolism; protoporphyrin-IX biosynthesis; coproporphyrinogen-III from 5-aminolevulinate: step 2/4. Tetrapolymerization of the monopyrrole PBG into the hydroxymethylbilane pre-uroporphyrinogen in several discrete steps. The protein is Porphobilinogen deaminase of Pseudomonas syringae pv. syringae (strain B728a).